We begin with the raw amino-acid sequence, 63 residues long: Large ribosomal subunit protein uL29 (63 aa).

Belongs to the universal ribosomal protein uL29 family.

The protein is Large ribosomal subunit protein uL29 of Idiomarina loihiensis (strain ATCC BAA-735 / DSM 15497 / L2-TR).